The sequence spans 1928 residues: Lactase/phlorizin hydrolase (1928 aa).

A signal peptide spans 1 to 21; it reads MELPWTALFLSTVLLGLSCQG. The propeptide at 22 to 867 is XBetaGly; it reads SDWESDRNFI…LPVRADFTSR (846 aa). Residues 22-1883 are Extracellular-facing; it reads SDWESDRNFI…LMLGIAEAQT (1862 aa). The tract at residues 46 to 289 is glycosyl hydrolase-1 1; Region I; that stretch reads NYPPGKQGSD…FIYTLKLEDC (244 aa). Positions 364–856 are glycosyl hydrolase-1 2; Region II; the sequence is VWAAFANQSR…GFSAKKVKRN (493 aa). N-linked (GlcNAc...) asparagine glycosylation is found at asparagine 370, asparagine 514, asparagine 824, asparagine 936, asparagine 948, asparagine 991, and asparagine 1037. The tract at residues 904-1367 is glycosyl hydrolase-1 3; Region III. Phlorizin hydrolase/Glycosylceramidase activity; sequence RFRDDFLWGV…DLIANNGMPL (464 aa). Glutamate 1067 (proton donor; for phlorizin hydrolase/Glycosylceramidase activity) is an active-site residue. Asparagine 1176 and asparagine 1240 each carry an N-linked (GlcNAc...) asparagine glycan. Glutamate 1274 serves as the catalytic Nucleophile; for phlorizin hydrolase/Glycosylceramidase activity. 2 N-linked (GlcNAc...) asparagine glycosylation sites follow: asparagine 1281 and asparagine 1509. The tract at residues 1374–1847 is glycosyl hydrolase-1 4; Region IV. Lactase activity; it reads LYGEFPKGFI…CNGFPDPAQG (474 aa). Glutamate 1539 functions as the Proton donor; for lactase activity in the catalytic mechanism. 2 N-linked (GlcNAc...) asparagine glycosylation sites follow: asparagine 1657 and asparagine 1684. Glutamate 1750 functions as the Nucleophile; for lactase activity in the catalytic mechanism. Asparagine 1762 and asparagine 1815 each carry an N-linked (GlcNAc...) asparagine glycan. The helical transmembrane segment at 1884–1902 threads the bilayer; sequence ALYVLFALLLLGACSLAFL. At 1903-1928 the chain is on the cytoplasmic side; sequence TYNTGRRSKQGNAQPSQHQLSPISSF.

Belongs to the glycosyl hydrolase 1 family. Homodimer. N-glycosylated. Intestine.

It localises to the apical cell membrane. The catalysed reaction is lactose + H2O = beta-D-galactose + D-glucose. It carries out the reaction phlorizin + H2O = phloretin + beta-D-glucose. The enzyme catalyses D-cellobiose + H2O = beta-D-glucose + D-glucose. It catalyses the reaction quercetin 4'-O-beta-D-glucoside + H2O = quercetin + beta-D-glucose. The catalysed reaction is quercetin 3-O-beta-D-glucoside + H2O = quercetin + beta-D-glucose. It carries out the reaction kaempferol 3-O-beta-D-glucoside + H2O = kaempferol + beta-D-glucose. The enzyme catalyses luteolin 7-O-beta-D-glucoside + H2O = luteolin + beta-D-glucose. It catalyses the reaction luteolin 4'-O-beta-D-glucoside + H2O = luteolin + beta-D-glucose. The catalysed reaction is (2S)-naringenin 7-O-beta-D-glucoside + H2O = (2S)-naringenin + beta-D-glucose. It carries out the reaction eriodictyol-7-O-beta-D-glucoside + H2O = (S)-eriodictyol + beta-D-glucose. The enzyme catalyses apigenin 7-O-beta-D-glucoside + H2O = apigenin + beta-D-glucose. It catalyses the reaction daidzein 7-O-beta-D-glucoside + H2O = daidzein + beta-D-glucose + H(+). The catalysed reaction is genistein 7-O-beta-D-glucoside + H2O = genistein + beta-D-glucose. It carries out the reaction a beta-D-galactosyl-N-acylsphingosine + H2O = a ceramide + beta-D-galactose.. The enzyme catalyses beta-D-glucosyl-(1&lt;-&gt;1')-N-hexadecanoylsphing-4-enine + H2O = N-hexadecanoylsphing-4-enine + beta-D-glucose. It catalyses the reaction beta-D-galactosyl-(1&lt;-&gt;1')-N-hexadecanoylsphing-4-enine + H2O = beta-D-galactose + N-hexadecanoylsphing-4-enine. The catalysed reaction is beta-D-galactosyl-(1&lt;-&gt;1')-N-hexadecanoylsphinganine + H2O = N-hexadecanoylsphinganine + beta-D-galactose. It carries out the reaction beta-D-glucosyl-(1&lt;-&gt;1')-N-hexadecanoylsphinganine + H2O = N-hexadecanoylsphinganine + beta-D-glucose. Functionally, broad specificity glycosidase of the intestinal brush border membrane that hydrolyzes lactose, the main sugar in mammalian milk, to produce D-glucose and D-galactose. The mature protein is composed of two domains that catalyze the hydrolysis of beta-glucopyranosides and beta-galactopyranosides, with a preference for hydrophilic aglycones (in lactose and cellobiose) for one domain and hydrophobic aglycones (in phlorizin and glycosylceramides) for the other. The chain is Lactase/phlorizin hydrolase from Rattus norvegicus (Rat).